A 199-amino-acid chain; its full sequence is Holliday junction branch migration complex subunit RuvA (199 aa).

The tract at residues 1–63 is domain I; that stretch reads MIGKLNGKID…EEHIHLYGFL (63 aa). Residues 64–141 form a domain II region; sequence TLEEKNFFNL…TKIFSSSAII (78 aa). A flexible linker region spans residues 141-145; it reads IKDSN. Residues 146 to 199 are domain III; that stretch reads ISSIAINEVMKALVNLGFTRFEAQNTVQGIITQNPKISIDELIKTALKNRNSSF.

The protein belongs to the RuvA family. Homotetramer. Forms an RuvA(8)-RuvB(12)-Holliday junction (HJ) complex. HJ DNA is sandwiched between 2 RuvA tetramers; dsDNA enters through RuvA and exits via RuvB. An RuvB hexamer assembles on each DNA strand where it exits the tetramer. Each RuvB hexamer is contacted by two RuvA subunits (via domain III) on 2 adjacent RuvB subunits; this complex drives branch migration. In the full resolvosome a probable DNA-RuvA(4)-RuvB(12)-RuvC(2) complex forms which resolves the HJ.

It is found in the cytoplasm. In terms of biological role, the RuvA-RuvB-RuvC complex processes Holliday junction (HJ) DNA during genetic recombination and DNA repair, while the RuvA-RuvB complex plays an important role in the rescue of blocked DNA replication forks via replication fork reversal (RFR). RuvA specifically binds to HJ cruciform DNA, conferring on it an open structure. The RuvB hexamer acts as an ATP-dependent pump, pulling dsDNA into and through the RuvAB complex. HJ branch migration allows RuvC to scan DNA until it finds its consensus sequence, where it cleaves and resolves the cruciform DNA. In Rickettsia prowazekii (strain Madrid E), this protein is Holliday junction branch migration complex subunit RuvA.